The sequence spans 235 residues: Orotidine 5'-phosphate decarboxylase (235 aa).

Substrate-binding positions include aspartate 10, lysine 33, 60-69, threonine 123, arginine 185, glutamine 194, glycine 214, and arginine 215; that span reads DLKMHDIPNT. Residue lysine 62 is the Proton donor of the active site.

The protein belongs to the OMP decarboxylase family. Type 1 subfamily. As to quaternary structure, homodimer.

It catalyses the reaction orotidine 5'-phosphate + H(+) = UMP + CO2. The protein operates within pyrimidine metabolism; UMP biosynthesis via de novo pathway; UMP from orotate: step 2/2. Its function is as follows. Catalyzes the decarboxylation of orotidine 5'-monophosphate (OMP) to uridine 5'-monophosphate (UMP). The polypeptide is Orotidine 5'-phosphate decarboxylase (Lactobacillus acidophilus (strain ATCC 700396 / NCK56 / N2 / NCFM)).